Here is a 121-residue protein sequence, read N- to C-terminus: RxLR effector protein PexRD2 (121 aa).

The first 18 residues, 1 to 18, serve as a signal peptide directing secretion; sequence MRLSYVFVVFAASLLVTA. A RxLR-dEER motif is present at residues 38–56; that stretch reads RLLRKHYTAAENDGDSEAR. The segment at 57–121 is WY domain; that stretch reads ALNPEKMKTM…LNYVAEHTAV (65 aa).

The protein belongs to the RxLR effector family.

It localises to the secreted. The protein localises to the host cytoplasm. Its subcellular location is the host nucleus. Secreted effector involved in P.mirabilis colonization of host plants. May perturb the signaling of cell death associated with plant immunity, via interaction with a host MAP kinase. The chain is RxLR effector protein PexRD2 from Phytophthora mirabilis.